Reading from the N-terminus, the 644-residue chain is ATP-dependent zinc metalloprotease FtsH (644 aa).

Residues 1-4 (MAKN) are Cytoplasmic-facing. Residues 5–25 (LILWLVIAVVLMSVFQSFGPS) form a helical membrane-spanning segment. The Periplasmic portion of the chain corresponds to 26 to 98 (ESNGRKVDYS…VGEPPEEPSL (73 aa)). The helical transmembrane segment at 99 to 119 (LASIFISWFPMLLLIGVWIFF) threads the bilayer. Residues 120–644 (MRQMQGGGGK…NTMSEQLGDK (525 aa)) are Cytoplasmic-facing. 192-199 (GPPGTGKT) lines the ATP pocket. Residue His414 coordinates Zn(2+). Residue Glu415 is part of the active site. 2 residues coordinate Zn(2+): His418 and Asp492. A disordered region spans residues 598-644 (VRPPAGWEEPGASNNSGDNGSPKAPRPVDEPRTPNPGNTMSEQLGDK). Residues 632–644 (NPGNTMSEQLGDK) show a composition bias toward polar residues.

In the central section; belongs to the AAA ATPase family. The protein in the C-terminal section; belongs to the peptidase M41 family. In terms of assembly, homohexamer. The cofactor is Zn(2+).

The protein localises to the cell inner membrane. In terms of biological role, acts as a processive, ATP-dependent zinc metallopeptidase for both cytoplasmic and membrane proteins. Plays a role in the quality control of integral membrane proteins. This Shigella flexneri protein is ATP-dependent zinc metalloprotease FtsH.